The chain runs to 200 residues: Holliday junction branch migration complex subunit RuvA (200 aa).

Residues 1-64 form a domain I region; the sequence is MLSYLSGTLI…EDALQLYGFI (64 aa). The segment at 65 to 143 is domain II; it reads TTEDREVFKL…KLDLKIDIKE (79 aa). Positions 144 to 148 are flexible linker; it reads TAFRS. Residues 149 to 200 are domain III; the sequence is DKQQVRNDAYSALISLGFTKSIAEKAMRAAIAEVPDGSVDDLIRVALRHVQS.

Belongs to the RuvA family. Homotetramer. Forms an RuvA(8)-RuvB(12)-Holliday junction (HJ) complex. HJ DNA is sandwiched between 2 RuvA tetramers; dsDNA enters through RuvA and exits via RuvB. An RuvB hexamer assembles on each DNA strand where it exits the tetramer. Each RuvB hexamer is contacted by two RuvA subunits (via domain III) on 2 adjacent RuvB subunits; this complex drives branch migration. In the full resolvosome a probable DNA-RuvA(4)-RuvB(12)-RuvC(2) complex forms which resolves the HJ.

It is found in the cytoplasm. In terms of biological role, the RuvA-RuvB-RuvC complex processes Holliday junction (HJ) DNA during genetic recombination and DNA repair, while the RuvA-RuvB complex plays an important role in the rescue of blocked DNA replication forks via replication fork reversal (RFR). RuvA specifically binds to HJ cruciform DNA, conferring on it an open structure. The RuvB hexamer acts as an ATP-dependent pump, pulling dsDNA into and through the RuvAB complex. HJ branch migration allows RuvC to scan DNA until it finds its consensus sequence, where it cleaves and resolves the cruciform DNA. In Chloroherpeton thalassium (strain ATCC 35110 / GB-78), this protein is Holliday junction branch migration complex subunit RuvA.